A 688-amino-acid polypeptide reads, in one-letter code: Glycine--tRNA ligase beta subunit (688 aa).

It belongs to the class-II aminoacyl-tRNA synthetase family. Tetramer of two alpha and two beta subunits.

It is found in the cytoplasm. The enzyme catalyses tRNA(Gly) + glycine + ATP = glycyl-tRNA(Gly) + AMP + diphosphate. This Vibrio parahaemolyticus serotype O3:K6 (strain RIMD 2210633) protein is Glycine--tRNA ligase beta subunit.